The chain runs to 1117 residues: MDSKDESSHVWPTSAEHEQNAAQVHFVPDTGTVAQIVYTDDQVRPPQQVVYTADGASYTSVDGPEHTLVYIHPVEAAQTLFTDPGQVAYVQQDATAQQTPLGGLEAKEEEDEDEDEDTEEDEEEDGEDADLDDWEPDPPRPFDPHDLWCEECNNAHSSVCPKHGPLHPIPNRPVLTRARASLPLVLYIDRFLGGVFSKRRIPKRTQLGPVEGPLVRGSELKDCYIHLKVSLDKGDRKDRDLHEDLWFELSDETLCNWMMFVRPAQNHLEQNLVAYQYGHHVYYTTIKNVEPKQELKVWYAASYAEFVNQKIHDISEEERKVLREQEKNWPCYECNRRFISSEQLQQHLNSHDEKLDVFSRTRGRGRGRGKRRFGPGRRPGRPPKFIRLEITSENGEKSDDGTQDLLHFPTKEQFDEAEPATLNGLDQPEQTTIPIPQLPQETQSSLEHEPETHTLHLQPQHEESVVPTQSTLTADDMRRAKRIRNAALQHLFIRKSFRPFKCLQCGKAFREKDKLDQHLRFHGREGNCPLTCDLCNKGFISSASLESHMKLHSDQKTYSCIFCPESFDRLDLLKDHVAIHINDGYFTCPTCKKRFPDFIQVKKHVRSFHSEKIYQCTECDKAFCRPDKLRLHMLRHSDRKDFLCSTCGKQFKRKDKLREHMQRMHNPEREAKKADRISRSKTFKPRITSTDYDSFTFKCRLCMMGFRRRGMLVNHLSKRHPDMKIEEVPELTLPIIKPNRDYFCQYCDKVYKSASKRKAHILKNHPGAELPPSIRKLRPAGPGEPDPMLSTHTQLTGTIATPPVCCPHCSKQYSSKTKMVQHIRKKHPEFAQLSSTIHTPLTTAVISATPAVLTTDSATGETVVTTDLLTQAMTELSQTLTTDYRTPQGDYQRIQYIPVSQSASGLQQPQHIQLQVVQVAPATSPHQSQQSTVDVGQLHDPQPYPQHAIQVQHIQVSGQPLSPSAQQAQQGLSPSHIQGSSSTQGQALQQQQQQQQNSSVQHTYLPSAWNSFRGYSSEIQMMTLPPGQFVITDSGVATPVTTGQVKAVTSGHYVLSESQSDLEEKQTSALSGGVQVQPPAHSDSLDPQTTSQQQTTQYIITTTTNGNGSSEVHITKP.

The tract at residues 97-142 is disordered; it reads QQTPLGGLEAKEEEDEDEDEDTEEDEEEDGEDADLDDWEPDPPRPF. Acidic residues predominate over residues 107 to 136; sequence KEEEDEDEDEDTEEDEEEDGEDADLDDWEP. An SET domain is found at 182-300; it reads LPLVLYIDRF…PKQELKVWYA (119 aa). The tract at residues 201–305 is N-terminal PR domain; essential for transcriptional activator activity; that stretch reads IPKRTQLGPV…KVWYAASYAE (105 aa). A C2H2-type 1 zinc finger spans residues 329 to 351; sequence WPCYECNRRFISSEQLQQHLNSH. Lys354 participates in a covalent cross-link: Glycyl lysine isopeptide (Lys-Gly) (interchain with G-Cter in SUMO2). Basic residues predominate over residues 361 to 381; it reads TRGRGRGRGKRRFGPGRRPGR. Residues 361–386 form a disordered region; the sequence is TRGRGRGRGKRRFGPGRRPGRPPKFI. Ser398 is subject to Phosphoserine. A Phosphothreonine modification is found at Thr402. The tract at residues 440–474 is disordered; that stretch reads QETQSSLEHEPETHTLHLQPQHEESVVPTQSTLTA. Positions 446 to 464 are enriched in basic and acidic residues; it reads LEHEPETHTLHLQPQHEES. 9 C2H2-type zinc fingers span residues 500–522, 530–552, 558–580, 586–609, 614–636, 642–665, 697–720, 742–765, and 804–827; these read FKCL…LRFH, LTCD…MKLH, YSCI…VAIH, FTCP…RSFH, YQCT…MLRH, FLCS…QRMH, FKCR…SKRH, YFCQ…LKNH, and VCCP…RKKH. A C-terminal glutamine-rich region; essential for transcriptional activator activity region spans residues 871–1097; that stretch reads QAMTELSQTL…QTTSQQQTTQ (227 aa). 3 disordered regions span residues 919–943, 958–1001, and 1066–1094; these read VAPA…DPQP, GQPL…SSVQ, and QTSA…SQQQ. The segment covering 924–934 has biased composition (polar residues); it reads SPHQSQQSTVD.

It belongs to the class V-like SAM-binding methyltransferase superfamily.

The protein resides in the nucleus. Its function is as follows. Transcriptional activator, essential for early embryonic development and survival of embryonic stem cells (ESCs). Supports cell growth and survival during early development by transcriptionally activating the expression of the translation initiation factor EIF3B, to sustain global translation. Activates the transcription of FLNC. This is PR domain zinc finger protein 10 (PRDM10) from Pongo abelii (Sumatran orangutan).